The following is a 344-amino-acid chain: Protein YRO2 (344 aa).

Over 1 to 34 (MSDYVELLKRGGNEAIKINPPTGADFHITSRGSD) the chain is Extracellular. Residues 35–55 (WLFTVFCVNLLFGVILVPLMF) form a helical membrane-spanning segment. Topologically, residues 56–62 (RKPVKDR) are cytoplasmic. Residues 63–83 (FVYYTAIAPNLFMSIAYFTMA) traverse the membrane as a helical segment. Residues 84-119 (SNLGWIPVRAKYNHVQTSTQKEHPGYRQIFYARYVG) are Extracellular-facing. Residues 120–140 (WFLAFPWPIIQMSLLGGTPLW) form a helical membrane-spanning segment. Position 141 (Gln141) is a topological domain, cytoplasmic. A helical membrane pass occupies residues 142–162 (IAFNVGMTEIFTVCWLIAACV). At 163-172 (HSTYKWGYYT) the chain is on the extracellular side. A helical transmembrane segment spans residues 173 to 193 (IGIGAAIVVCISLMTTTFNLV). At 194 to 202 (KARGKDVSN) the chain is on the cytoplasmic side. Residues 203 to 223 (VFITFMSVIMFLWLIAYPTCF) traverse the membrane as a helical segment. At 224-238 (GITDGGNVLQPDSAT) the chain is on the extracellular side. The helical transmembrane segment at 239–259 (IFYGIIDLLILSILPVLFMPL) threads the bilayer. Residues 260-344 (ANYLGIERLG…EEEDVATDSE (85 aa)) lie on the Cytoplasmic side of the membrane. The segment at 282–344 (PVAEKKMPSP…EEEDVATDSE (63 aa)) is disordered. Lys286 participates in a covalent cross-link: Glycyl lysine isopeptide (Lys-Gly) (interchain with G-Cter in ubiquitin). Ser293 carries the post-translational modification Phosphoserine. Residues 297-306 (SDSDSSIKEK) show a composition bias toward basic and acidic residues. Positions 307 to 330 (LKLKKKHKKDKKKAKKAKKAKKAK) are enriched in basic residues. Positions 334-344 (EEEEDVATDSE) are enriched in acidic residues. Thr341 bears the Phosphothreonine mark. Ser343 carries the post-translational modification Phosphoserine.

This sequence belongs to the archaeal/bacterial/fungal opsin family.

It is found in the membrane. In Saccharomyces cerevisiae (strain ATCC 204508 / S288c) (Baker's yeast), this protein is Protein YRO2 (YRO2).